The following is a 610-amino-acid chain: Menin (610 aa).

The interaction with FANCD2 stretch occupies residues 214-390 (GVAERSWLYL…SLLEAGEERP (177 aa)). The interval 462-552 (AEAAEAEELW…SPPPEGPVLT (91 aa)) is disordered. Residues 484–500 (RRESKPEEPPPPKKPAL) are compositionally biased toward basic and acidic residues. Phosphoserine is present on residues S487 and S543. A compositionally biased stretch (pro residues) spans 537–548 (APAPAASPPPEG). Residue T594 is modified to Phosphothreonine.

Component of the MLL-HCF complex, at least composed of KMT2A/MLL1, MEN1, ASH2L, RBBP5, DPY30, WDR5, HCFC1 and HCFC2. Component of the menin-associated histone methyltransferase complex, at least composed of KMT2B/MLL4, MEN1, ASH2L, RBBP5, DPY30 and WDR5. Interacts with POLR2B. Interacts with POLR2A phosphorylated at 'Ser-5', but not with the unphosphorylated, nor 'Ser-2' phosphorylated POLR2A forms. Interacts with FANCD2 and DBF4. Interacts with SMAD3, but not with SMAD2, nor SMAD4. Directly interacts with NFKB1, NFKB2 and RELA. Interacts with JUND (via MBM motif); inhibits the interaction of JUND with MAPK10 and the phosphorylation of JUND by MAP kinases MAPK8 and MAPK10. Interacts with KMT2A (via MBM motif). The KMT2A-MEN1 complex interacts with PSIP1 with a greater affinity as MEN1 enhances interaction of KMT2A with PSIP1.

It is found in the nucleus. Its function is as follows. Essential component of a MLL/SET1 histone methyltransferase (HMT) complex, a complex that specifically methylates 'Lys-4' of histone H3 (H3K4). Functions as a transcriptional regulator. Binds to the TERT promoter and represses telomerase expression. Plays a role in TGFB1-mediated inhibition of cell-proliferation, possibly regulating SMAD3 transcriptional activity. Represses JUND-mediated transcriptional activation on AP1 sites, as well as that mediated by NFKB subunit RELA. Positively regulates HOXC8 and HOXC6 gene expression. May be involved in normal hematopoiesis through the activation of HOXA9 expression. May be involved in DNA repair. The sequence is that of Menin (MEN1) from Canis lupus familiaris (Dog).